The sequence spans 482 residues: Cysteine--tRNA ligase (482 aa).

Cysteine 29 is a Zn(2+) binding site. The short motif at 31 to 41 (VTVYDYCHLGH) is the 'HIGH' region element. Residues cysteine 213, histidine 238, and glutamate 242 each contribute to the Zn(2+) site. Positions 275–279 (KMSKS) match the 'KMSKS' region motif. Lysine 278 lines the ATP pocket.

It belongs to the class-I aminoacyl-tRNA synthetase family. As to quaternary structure, monomer. It depends on Zn(2+) as a cofactor.

The protein localises to the cytoplasm. The enzyme catalyses tRNA(Cys) + L-cysteine + ATP = L-cysteinyl-tRNA(Cys) + AMP + diphosphate. In Gloeobacter violaceus (strain ATCC 29082 / PCC 7421), this protein is Cysteine--tRNA ligase.